A 218-amino-acid chain; its full sequence is Adenylate kinase (218 aa).

An ATP-binding site is contributed by 10 to 15; that stretch reads GAGKGT. Residues 30-59 are NMP; it reads STGNMLRAAVKAGTPLGLEAKKVMDAGGLV. AMP is bound by residues threonine 31, arginine 36, 57–59, 85–88, and glutamine 92; these read GLV and GFPR. The LID stretch occupies residues 122 to 159; the sequence is GRRVHPASGRSYHVRFNPPKAEGVDDVTGEPLVQRDDD. Residues arginine 123 and 132–133 each bind ATP; that span reads SY. AMP-binding residues include arginine 156 and arginine 167. An ATP-binding site is contributed by glycine 203.

This sequence belongs to the adenylate kinase family. Monomer.

The protein resides in the cytoplasm. The catalysed reaction is AMP + ATP = 2 ADP. It participates in purine metabolism; AMP biosynthesis via salvage pathway; AMP from ADP: step 1/1. Its function is as follows. Catalyzes the reversible transfer of the terminal phosphate group between ATP and AMP. Plays an important role in cellular energy homeostasis and in adenine nucleotide metabolism. The sequence is that of Adenylate kinase from Bordetella parapertussis (strain 12822 / ATCC BAA-587 / NCTC 13253).